We begin with the raw amino-acid sequence, 502 residues long: Glycerol kinase (502 aa).

Residue threonine 14 participates in ADP binding. ATP contacts are provided by threonine 14, threonine 15, and serine 16. Threonine 14 lines the sn-glycerol 3-phosphate pocket. Arginine 18 is an ADP binding site. Residues arginine 84, glutamate 85, and tyrosine 136 each coordinate sn-glycerol 3-phosphate. The glycerol site is built by arginine 84, glutamate 85, and tyrosine 136. Histidine 232 is modified (phosphohistidine; by HPr). Aspartate 246 lines the sn-glycerol 3-phosphate pocket. Residues aspartate 246 and glutamine 247 each contribute to the glycerol site. ADP contacts are provided by threonine 268 and glycine 311. Residues threonine 268, glycine 311, glutamine 315, and glycine 412 each coordinate ATP. Glycine 412 and asparagine 416 together coordinate ADP.

Belongs to the FGGY kinase family. In terms of assembly, homotetramer and homodimer (in equilibrium). The phosphoenolpyruvate-dependent sugar phosphotransferase system (PTS), including enzyme I, and histidine-containing protein (HPr) are required for the phosphorylation, which leads to the activation of the enzyme.

It carries out the reaction glycerol + ATP = sn-glycerol 3-phosphate + ADP + H(+). The protein operates within polyol metabolism; glycerol degradation via glycerol kinase pathway; sn-glycerol 3-phosphate from glycerol: step 1/1. Activated by phosphorylation and inhibited by fructose 1,6-bisphosphate (FBP). In terms of biological role, key enzyme in the regulation of glycerol uptake and metabolism. Catalyzes the phosphorylation of glycerol to yield sn-glycerol 3-phosphate. The chain is Glycerol kinase from Streptococcus pneumoniae (strain Hungary19A-6).